The following is a 604-amino-acid chain: uncharacterized protein (604 aa).

The ABC transmembrane type-1 domain occupies 49-332 (LILVMLMVVI…LANQFNTMLS (284 aa)). Helical transmembrane passes span 50 to 70 (ILVMLMVVISAIFGLLGPFVI), 86 to 106 (LIPVLLLLLAIYIIQSLSLWF), 172 to 192 (VITFVGTIAVMLYMSPLLTLI), and 288 to 308 (IAAIGGLFALKGWISIGSIVV). In terms of domain architecture, ABC transporter spans 366-600 (IEFRDVSFGY…KGFYSDLYES (235 aa)). ATP is bound at residue 399-406 (GPTGAGKT). Residues 510–530 (LISIARAVLADPVLLILDEAT) traverse the membrane as a helical segment.

The protein belongs to the ABC transporter superfamily.

The protein resides in the cell membrane. This is an uncharacterized protein from Bacillus subtilis (strain 168).